A 255-amino-acid chain; its full sequence is Adenosylcobinamide-GDP ribazoletransferase (255 aa).

The next 6 membrane-spanning stretches (helical) occupy residues 43–63, 64–84, 113–133, 141–161, 195–215, and 234–254; these read LVGT…SLFF, PYQV…GAFH, IGTY…VFLT, FGLM…TLIY, LAAI…AILF, and CLGG…IAVV.

It belongs to the CobS family. Requires Mg(2+) as cofactor.

Its subcellular location is the cell inner membrane. The catalysed reaction is alpha-ribazole + adenosylcob(III)inamide-GDP = adenosylcob(III)alamin + GMP + H(+). The enzyme catalyses alpha-ribazole 5'-phosphate + adenosylcob(III)inamide-GDP = adenosylcob(III)alamin 5'-phosphate + GMP + H(+). It functions in the pathway cofactor biosynthesis; adenosylcobalamin biosynthesis; adenosylcobalamin from cob(II)yrinate a,c-diamide: step 7/7. In terms of biological role, joins adenosylcobinamide-GDP and alpha-ribazole to generate adenosylcobalamin (Ado-cobalamin). Also synthesizes adenosylcobalamin 5'-phosphate from adenosylcobinamide-GDP and alpha-ribazole 5'-phosphate. The sequence is that of Adenosylcobinamide-GDP ribazoletransferase from Vibrio vulnificus (strain CMCP6).